A 104-amino-acid polypeptide reads, in one-letter code: U20-lycotoxin-Ls1d (104 aa).

An N-terminal signal peptide occupies residues 1-30; that stretch reads MFSTSDQVSKMNSRILSALLILGIATCVIA. In terms of domain architecture, WAP spans 31–76; sequence GGFCPKSRHPQCNLSYKINDCCAQSDCRVGSVCCVEGCGNVCRAES. 5 disulfides stabilise this stretch: C34-C64, C42-C68, C51-C63, C52-C90, and C57-C72.

The protein belongs to the venom protein 11 family. 02 (wap-2) subfamily. In terms of processing, contains 5 disulfide bonds. In terms of tissue distribution, expressed by the venom gland.

Its subcellular location is the secreted. Its function is as follows. Has antibacterial activity. In Lycosa singoriensis (Wolf spider), this protein is U20-lycotoxin-Ls1d.